The following is a 243-amino-acid chain: Killer cell lectin-like receptor subfamily I member 1 (243 aa).

The Cytoplasmic portion of the chain corresponds to 1 to 80 (MPHSKHRDYT…RQGPKSAVWR (80 aa)). 2 short sequence motifs (ITIM motif) span residues 16–21 (IPYTEL) and 47–52 (LKYAEL). Residues 81–101 (VVTCVLGVLCVVLMITMGILV) traverse the membrane as a helical; Signal-anchor for type II membrane protein segment. The Extracellular segment spans residues 102–243 (PKLFSGQEEQ…KPYACEFNKM (142 aa)). N-linked (GlcNAc...) asparagine glycosylation is found at asparagine 123, asparagine 191, asparagine 194, asparagine 200, and asparagine 214. The C-type lectin domain maps to 137–239 (FGNNFYLFFR…CSSKKPYACE (103 aa)). Intrachain disulfides connect cysteine 158–cysteine 238 and cysteine 217–cysteine 230.

In terms of assembly, heterodimer with KLRE1. Interacts with PTPN6. In terms of tissue distribution, expressed in natural killer (NK) cells.

The protein resides in the cell membrane. Its function is as follows. Lectin-like receptor for natural killer (NK) cells. Heterodimer formation with KLRE1 mediates inhibition of NK cell cytolytic activity. The protein is Killer cell lectin-like receptor subfamily I member 1 of Rattus norvegicus (Rat).